Reading from the N-terminus, the 411-residue chain is Putative acid phosphatase 10 (411 aa).

His-33 (nucleophile) is an active-site residue. Asp-313 (proton donor) is an active-site residue. A disulfide bond links Cys-379 and Cys-385.

This sequence belongs to the histidine acid phosphatase family.

The enzyme catalyses a phosphate monoester + H2O = an alcohol + phosphate. This Caenorhabditis elegans protein is Putative acid phosphatase 10 (pho-10).